Reading from the N-terminus, the 427-residue chain is Transcription termination factor Rho (427 aa).

The region spanning Leu-51–Asp-125 is the Rho RNA-BD domain. ATP contacts are provided by residues Gly-168–Gly-173, Lys-180–Met-185, and Arg-211.

This sequence belongs to the Rho family. In terms of assembly, homohexamer. The homohexamer assembles into an open ring structure.

Functionally, facilitates transcription termination by a mechanism that involves Rho binding to the nascent RNA, activation of Rho's RNA-dependent ATPase activity, and release of the mRNA from the DNA template. The protein is Transcription termination factor Rho of Bacillus subtilis (strain 168).